Here is a 355-residue protein sequence, read N- to C-terminus: Myosin-binding protein H-like (355 aa).

2 stretches are compositionally biased toward polar residues: residues 1–16 (METATTLEIASCSQRQ) and 31–41 (TSHQQEAGSPS). The disordered stretch occupies residues 1 to 41 (METATTLEIASCSQRQVEAAADPADAKGPRTSHQQEAGSPS). Ser-39 carries the phosphoserine modification. Residues 46-140 (PSIEEHPKIW…GGLQATATIN (95 aa)) enclose the Ig-like C2-type 1 domain. Positions 149–244 (PPQSIKLVDV…TADLAHIQKA (96 aa)) constitute a Fibronectin type-III domain. Positions 262-346 (PKFTQPLADC…INALGEASVD (85 aa)) constitute an Ig-like C2-type 2 domain. The cysteines at positions 283 and 334 are disulfide-linked. At Arg-322 the chain carries Omega-N-methylarginine.

Belongs to the immunoglobulin superfamily. MyBP family. Expressed in the atria as well as in discrete puncta throughout the right ventricular wall and septum.

Its subcellular location is the cytoplasm. The protein resides in the myofibril. It localises to the sarcomere. Functionally, myosin-binding protein which plays a role in cardiac function. Seems to regulate conduction in the atria and ventricular conduction systems. The protein is Myosin-binding protein H-like of Mus musculus (Mouse).